We begin with the raw amino-acid sequence, 74 residues long: MNKYLFDHKIWSTPYYFYCEEDCHRLFLSFIEGRTFEKPTSNAEENVQETEAGESFTLNPGEDFQNCFPRQRIL.

Belongs to the DUP/COS family.

Its subcellular location is the cytoplasm. It localises to the membrane. The chain is DUP240 protein DFP2 from Saccharomyces cerevisiae (strain ATCC 204508 / S288c) (Baker's yeast).